Consider the following 241-residue polypeptide: Isoprenyl transferase (241 aa).

Residue D17 is part of the active site. D17 serves as a coordination point for Mg(2+). Substrate-binding positions include 18-21 (GNGR), W22, R30, H34, and 62-64 (STE). N65 acts as the Proton acceptor in catalysis. Substrate contacts are provided by residues W66, R68, R186, and 192–194 (RLS). E205 contacts Mg(2+).

Belongs to the UPP synthase family. As to quaternary structure, homodimer. Requires Mg(2+) as cofactor.

Its function is as follows. Catalyzes the condensation of isopentenyl diphosphate (IPP) with allylic pyrophosphates generating different type of terpenoids. This is Isoprenyl transferase from Leptospira interrogans serogroup Icterohaemorrhagiae serovar copenhageni (strain Fiocruz L1-130).